Reading from the N-terminus, the 232-residue chain is Rhamnogalacturonan acetylesterase RhgT (232 aa).

Ser-14 functions as the Nucleophile in the catalytic mechanism. Catalysis depends on residues Glu-191 and His-195.

It belongs to the 'GDSL' lipolytic enzyme family. In terms of assembly, monomer.

Its activity is regulated as follows. Almost completely inhibited by diethylpyrocarbonate at 5 mM and completely inhibited by phenylmethylsulfonyl fluoride (PMSF) at 50 mM. Dimethyl phosphite achieves only a 53% inhibition. Also inhibited by metal ions (magnesium, manganese and calcium) and chelating agent (EDTA) at the same level. Functionally, may play a role in the degradation of type I rhamnogalacturonan derived from plant cell walls. This enzyme has a broad substrate specificity, and shows strong preference for glucose pentaacetate, beta-naphthylacetate, and p-nitrophenyl acetate (pNPA). Also active toward acetylated xylan. The chain is Rhamnogalacturonan acetylesterase RhgT (rhgT) from Bacillus subtilis (strain 168).